We begin with the raw amino-acid sequence, 954 residues long: MTDRIELTTANEFIARHIGPRAADELAMLHTLGFDSIEALSDSVIPESIKGTSVLNLPAGQSEADALASIKAIASKNQLFKTYIGQGYYNTHTPAPILRNLLENPAWYTAYTPYQPEISQGRLESLLNFQTLISDLTGLPIANASLLDEATAAAEAMTFCKRLSKNKGSQQFFASSHCHPQTLDVLRTRAEPLGITVVVADETELGDVSDYFGALLQYPASNGDVFDYRELAERFHGANALVAVAADLLALTLLTPPGEFGADVAIGSAQRFGVPLGFGGPHAAYFSTRDAFKRDMPGRLVGVSVDRHGKQALRLAMQTREQHIRREKATSNICTAQVLLANIASMYAVYHGPRGLTQIANRVHHLTAILAEGLSQLGLNAEQAYFFDSLTLHTGGRTAALHAAARARHINLREIDDQRLGLSLDETTSQSAVEVLWDIFASTGQTLPDFTALAASVKSRLPAALLRQSAILSHPVFNRYHSETELMRYLRKLADKDLALDRTMIPLGSCTMKLNAASEMIPVTWAEFGNLHPFAPAEQSAGYQQLTDELEAMLCAATGYDAISLQPNAGSQGEYAGLLAIRAYHQSRGDEHRDICLIPSSAHGTNPATANMAGMRVVVTACDARGNVDIEDLRAKALQHREQLAAIMITYPSTHGVFEEGIREICGIVHDNGGQVYIDGANMNAMVGLCAPGKFGGDVSHLNLHKTFCIPHGGGGPGVGPIGVKSHLAPFMPGHARMQRKEGAVCAAPFGSASILPITWMYIRMMGGEGLKRASQLAILNANYISRRLEEHYPVLYTGTNGLVAHECILDLRPIKDSSGISVDDVAKRLIDFGFHAPTMSFPVAGTLMIEPTESESREELDRFCDAMIKIREEIRAVEDGTLDKDDNPLKNAPHTAAEIVGQWSHPYSREQAVYPVDSLIENKYWPPVGRVDNVFGDRNLVCACPSIESYQEA.

Residue Lys-706 is modified to N6-(pyridoxal phosphate)lysine.

This sequence belongs to the GcvP family. As to quaternary structure, the glycine cleavage system is composed of four proteins: P, T, L and H. Pyridoxal 5'-phosphate is required as a cofactor.

The catalysed reaction is N(6)-[(R)-lipoyl]-L-lysyl-[glycine-cleavage complex H protein] + glycine + H(+) = N(6)-[(R)-S(8)-aminomethyldihydrolipoyl]-L-lysyl-[glycine-cleavage complex H protein] + CO2. Its function is as follows. The glycine cleavage system catalyzes the degradation of glycine. The P protein binds the alpha-amino group of glycine through its pyridoxal phosphate cofactor; CO(2) is released and the remaining methylamine moiety is then transferred to the lipoamide cofactor of the H protein. In Pseudomonas syringae pv. tomato (strain ATCC BAA-871 / DC3000), this protein is Glycine dehydrogenase (decarboxylating).